We begin with the raw amino-acid sequence, 115 residues long: Nucleoid-associated protein NATL1_00191 (115 aa).

Residues 89–115 (STSTMKERMEDLTGGFKLNLPGMGEES) form a disordered region.

Belongs to the YbaB/EbfC family. In terms of assembly, homodimer.

It is found in the cytoplasm. It localises to the nucleoid. In terms of biological role, binds to DNA and alters its conformation. May be involved in regulation of gene expression, nucleoid organization and DNA protection. This Prochlorococcus marinus (strain NATL1A) protein is Nucleoid-associated protein NATL1_00191.